Consider the following 339-residue polypeptide: Deubiquitinase and deneddylase Dub2 (339 aa).

Residues 36-56 (IIIALFLIVISCGLILCAYTF) form a helical membrane-spanning segment. Catalysis depends on residues histidine 203, aspartate 220, and cysteine 282.

The protein belongs to the peptidase C48 family.

The protein resides in the secreted. The protein localises to the host cell. It is found in the membrane. Functionally, effector proteins function to alter host cell physiology and promote bacterial survival in host tissues. This protease possesses deubiquitinating and deneddylating activities. The sequence is that of Deubiquitinase and deneddylase Dub2 (cdu2) from Chlamydia trachomatis serovar D (strain ATCC VR-885 / DSM 19411 / UW-3/Cx).